We begin with the raw amino-acid sequence, 208 residues long: ATP-dependent Clp protease proteolytic subunit (208 aa).

Ser107 (nucleophile) is an active-site residue. The active site involves His132.

Belongs to the peptidase S14 family. As to quaternary structure, fourteen ClpP subunits assemble into 2 heptameric rings which stack back to back to give a disk-like structure with a central cavity, resembling the structure of eukaryotic proteasomes.

The protein resides in the cytoplasm. The enzyme catalyses Hydrolysis of proteins to small peptides in the presence of ATP and magnesium. alpha-casein is the usual test substrate. In the absence of ATP, only oligopeptides shorter than five residues are hydrolyzed (such as succinyl-Leu-Tyr-|-NHMec, and Leu-Tyr-Leu-|-Tyr-Trp, in which cleavage of the -Tyr-|-Leu- and -Tyr-|-Trp bonds also occurs).. Cleaves peptides in various proteins in a process that requires ATP hydrolysis. Has a chymotrypsin-like activity. Plays a major role in the degradation of misfolded proteins. In Methylorubrum populi (strain ATCC BAA-705 / NCIMB 13946 / BJ001) (Methylobacterium populi), this protein is ATP-dependent Clp protease proteolytic subunit.